The primary structure comprises 274 residues: Large ribosomal subunit protein uL2cz/uL2cy (274 aa).

The tract at residues 225 to 274 (NPVDHPHGGGEGRAPIGRKKPTTPWGYPALGRRSRKRKKYSDSFILRRRK) is disordered.

Belongs to the universal ribosomal protein uL2 family. As to quaternary structure, part of the 50S ribosomal subunit.

The protein localises to the plastid. The protein resides in the chloroplast. The protein is Large ribosomal subunit protein uL2cz/uL2cy (rpl2-A) of Dioscorea elephantipes (Elephant's foot yam).